A 278-amino-acid chain; its full sequence is Cation-dependent mannose-6-phosphate receptor (278 aa).

A signal peptide spans 1–21 (MFPFSGCWRTELLLLLLLAVA). Residues 22-186 (VRESWQIEEK…SLACSPEVSH (165 aa)) lie on the Lumenal side of the membrane. Residues 31 to 182 (KSCDLVGEKD…EMDSSLACSP (152 aa)) form the MRH domain. C33 and C79 are disulfide-bonded. 5 N-linked (GlcNAc...) asparagine glycosylation sites follow: N58, N84, N95, N108, and N114. 2 disulfide bridges follow: C133–C168 and C146–C180. Residues 187–211 (LSVGSILLVIFASLVAVYIIGGFLY) traverse the membrane as a helical segment. At 212–278 (QRLVVGAKGM…EERDDHLLPM (67 aa)) the chain is on the cytoplasmic side. Residues 257 to 278 (RGVGDDQLGEESEERDDHLLPM) are disordered. S268 carries the post-translational modification Phosphoserine.

Homodimer. Binds GGA1, GGA2 and GGA3.

The protein resides in the lysosome membrane. Its function is as follows. Transport of phosphorylated lysosomal enzymes from the Golgi complex and the cell surface to lysosomes. Lysosomal enzymes bearing phosphomannosyl residues bind specifically to mannose-6-phosphate receptors in the Golgi apparatus and the resulting receptor-ligand complex is transported to an acidic prelyosomal compartment where the low pH mediates the dissociation of the complex. The protein is Cation-dependent mannose-6-phosphate receptor (M6pr) of Mus musculus (Mouse).